Reading from the N-terminus, the 258-residue chain is MPDMQTSRDTRKIPISKVGVKDISYPIVVMDKNRKFQQTVARVNMYVDLPHHFKGTHMSRFIEILNAYREDIALDKMEPILQEMKKKLGASSAHLEIEFPYFIEKRAPVSGARSLMEYTCTFTGTLAETFDFVLGVQVPVTSLCPCSKELSRYGAHNQRSHITVRVRYAGFVWIEELVELIEGCGSSPVWSLLKRADEKFVTERAYENPKFVEDIVREATLALAAHEAITWFSVEAENFESIHKHSAYAAIEQDKRKA.

This sequence belongs to the GTP cyclohydrolase IV family.

It catalyses the reaction GTP + H2O = 7,8-dihydroneopterin 3'-triphosphate + formate + H(+). The protein operates within cofactor biosynthesis; 7,8-dihydroneopterin triphosphate biosynthesis; 7,8-dihydroneopterin triphosphate from GTP: step 1/1. Converts GTP to 7,8-dihydroneopterin triphosphate. The chain is GTP cyclohydrolase FolE2 from Geobacter sulfurreducens (strain ATCC 51573 / DSM 12127 / PCA).